The sequence spans 702 residues: Ribosomal RNA large subunit methyltransferase K/L (702 aa).

The THUMP domain occupies 43–154 (LVYQSLMWSR…KETASIALDL (112 aa)).

Belongs to the methyltransferase superfamily. RlmKL family.

The protein resides in the cytoplasm. It catalyses the reaction guanosine(2445) in 23S rRNA + S-adenosyl-L-methionine = N(2)-methylguanosine(2445) in 23S rRNA + S-adenosyl-L-homocysteine + H(+). The enzyme catalyses guanosine(2069) in 23S rRNA + S-adenosyl-L-methionine = N(2)-methylguanosine(2069) in 23S rRNA + S-adenosyl-L-homocysteine + H(+). Its function is as follows. Specifically methylates the guanine in position 2445 (m2G2445) and the guanine in position 2069 (m7G2069) of 23S rRNA. The protein is Ribosomal RNA large subunit methyltransferase K/L of Escherichia coli O157:H7.